Reading from the N-terminus, the 447-residue chain is MNHSLYLVAGLGKTGLSIARYLKRNNKSFVVFDTRKEAPGLAEFQNEFPDVPIYLQQTPDEVISQVTDVITSPGLALDTPVLERARQAGASIYGDIECLAREISAPVIAITGTNGKSTVTTLVGEMAKAAGFRVAVAGNIGTPVLDMLDDEHHYDLWVLELSSFQLDLTYSLSPVVATILNVTPDHLDRHHTMEAYTQAKQRIYRGAKAVLFNREDVYTVPHQSCQADIKCISFGKDAPSMGNWGLIEQENTTYLAKGMERLLPVESILIKGVHNWMNALAACALAEAAGISMQHILNVLKTFPGLPHRCQWVREVDGVGWINDSKGTNIGATISAINGIGGSMQGKIVLIAGGQGKGADFQELAQPVSEFVRSIVLIGEDADKIESALAKVVPVVRASSLEGAVTIAKTCAKPGDVVLLSPACASLDMFRDFNHRGDVFTSSVRGL.

112 to 118 lines the ATP pocket; sequence GTNGKST.

This sequence belongs to the MurCDEF family.

Its subcellular location is the cytoplasm. The catalysed reaction is UDP-N-acetyl-alpha-D-muramoyl-L-alanine + D-glutamate + ATP = UDP-N-acetyl-alpha-D-muramoyl-L-alanyl-D-glutamate + ADP + phosphate + H(+). Its pathway is cell wall biogenesis; peptidoglycan biosynthesis. Its function is as follows. Cell wall formation. Catalyzes the addition of glutamate to the nucleotide precursor UDP-N-acetylmuramoyl-L-alanine (UMA). The sequence is that of UDP-N-acetylmuramoylalanine--D-glutamate ligase from Legionella pneumophila subsp. pneumophila (strain Philadelphia 1 / ATCC 33152 / DSM 7513).